A 697-amino-acid chain; its full sequence is MAKTTKSFLALLRGGNLGVPLVILCILAMVILPLPPALLDILFTFNIVLAVMVLLVAVSAKRPLEFSLFPTILLITTLMRLTLNVASTRVVLLHGHLGAGAAGKVIESFGQVVIGGNFVVGFVVFIILMIINFIVVTKGAERISEVSARFTLDAMPGKQMAIDADLNAGLINQAQAQTRRKDVASEADFYGAMDGASKFVRGDAIAGMMILAINLIGGVCIGIFKYNLSADAAFQQYVLMTIGDGLVAQIPSLLLSTAAAIIVTRVSDNGDIAHDVRHQLLASPSVLYTATGIMFVLAVVPGMPHLPFLLFSALLGFTGWRMSKRPQAAEAEEKSLETLTRTITETSEQQVSWETIPLIEPISLSLGYKLVALVDKAQGNPLTQRIRGVRQVISDGNGVLLPEIRIRENFRLKPSQYAIFINGIKADEADIPADKLMALPSSETYGEIDGVLGNDPAYGMPVTWIQPAQKAKALNMGYQVIDSASVIATHVNKIVRSYIPDLFNYDDITQLHNRLSSMAPRLAEDLSAALNYSQLLKVYRALLTEGVSLRDIVTIATVLVASSTLTKDHILLAADVRLALRRSITHPFVRKQELTVYTLNNELENLLTNVVNQAQQAGKVMLDSVPVDPNMLNQFQSTMPQVKEQMKAAGKAPVLLVPPQLRPLLARYARLFAPGLHVLSYNEVPDELELKIMGALS.

7 helical membrane-spanning segments follow: residues Val19–Leu39, Asp40–Ala60, Phe66–Ala86, Gly116–Val136, Ala204–Phe224, Ile242–Ile262, and Leu280–Gly302.

It belongs to the FHIPEP (flagella/HR/invasion proteins export pore) family.

Its subcellular location is the cell inner membrane. Functionally, part of the flagellar gene cluster Flag-2. However, the Flag-2 flagellar system could be inactive in strain 042 due to a frameshift in lfgC. The chain is Putative flagellar export/assembly protein LfhA from Escherichia coli O44:H18 (strain 042 / EAEC).